The sequence spans 330 residues: Transcription factor TGA6 (330 aa).

A compositionally biased stretch (polar residues) spans 1–13; that stretch reads MADTSSRTDVSTD. The tract at residues 1 to 45 is disordered; sequence MADTSSRTDVSTDGDTDHRDLGSDRGHMHAAASDSSDRSKDKLDQ. Basic and acidic residues-rich tracts occupy residues 15 to 27 and 35 to 45; these read DTDH…DRGH and SSDRSKDKLDQ. The bZIP domain maps to 44-107; it reads DQKTLRRLAQ…SSGDQAHSTG (64 aa). 2 coiled-coil regions span residues 45–142 and 217–233; these read QKTL…HAGD and INSL…ALSQ. The segment at 46–66 is basic motif; sequence KTLRRLAQNREAARKSRLRKK. Residues 72 to 86 form a leucine-zipper region; the sequence is LENSRLKLTQLEQEL. The 217-residue stretch at 111–327 folds into the DOG1 domain; it reads ALAFDAEHSR…RALSSLWLAR (217 aa).

The protein belongs to the bZIP family. In terms of assembly, binds DNA as a dimer. Interacts with NPR1, NPR3 and NPR4. Interacts with GRXC9/GRX480. Expressed predominantly in roots and flowers.

It localises to the nucleus. In terms of biological role, transcriptional activator that binds specifically to the DNA sequence 5'-TGACG-3'. Recognizes ocs elements like the as-1 motif of the cauliflower mosaic virus 35S promoter. Binding to the as-1-like cis elements mediate auxin- and salicylic acid-inducible transcription. May be involved in the induction of the systemic acquired resistance (SAR) via its interaction with NPR1. Could also bind to the Hex-motif (5'-TGACGTGG-3') another cis-acting element found in plant histone promoters. In Arabidopsis thaliana (Mouse-ear cress), this protein is Transcription factor TGA6 (TGA6).